Consider the following 1719-residue polypeptide: MSGEVRLRQLEQFILDGPAQTNGQCFSVETLLDILICLYDECNNSPLRREKNILEYLEWAKPFTSKVKQMRLHREDFEILKVIGRGAFGEVAVVKLKNADKVFAMKILNKWEMLKRAETACFREERDVLVNGDSKWITTLHYAFQDDNNLYLVMDYYVGGDLLTLLSKFEDRLPEEMARFYLAEMVIAIDSVHQLHYVHRDIKPDNILMDMNGHIRLADFGSCLKLMEDGTVQSSVAVGTPDYISPEILQAMEDGKGRYGPECDWWSLGVCMYEMLYGETPFYAESLVETYGKIMNHKERFQFPAQVTDVSENAKDLIRRLICSREHRLGQNGIEDFKKHPFFSGIDWDNIRNCEAPYIPEVSSPTDTSNFDVDDDCLKNSETMPPPTHTAFSGHHLPFVGFTYTSSCVLSDRSCLRVTAGPTSLDLDVSVQRTLDNNLATEAYERRIKRLEQEKLELTRKLQESTQTVQALQYSTVDGPLTASKDLEIKSLKEEIEKLRKQVAEVNHLEQQLEEANSVRRELDDAFRQIKASEKQIKTLQQEREELNKELVQASERLKNQSKELKDAHCQRKLAMQEFMEINERLTELHTQKQKLARHVRDKEEEVDLVMQKAESLRQELRRAERAKKELEVHTEALIAEASKDKKLREQSEHYSKQLENELEGLKQKQISYSPGICSIEHQQEITKLKTDLEKKSIFYEEEISKREGIHASEIKNLKKELHDSEGQQLALNKEILVLKDKLEKTRRESQSEREEFENEFKQQYEREKVLLTEENKKLTSELDKLTSLYESLSLRNQHLEEEVKDLADKKESVAHWEAQITEIIQWVSDEKDARGYLQALASKMTEELEALRNSSLGTRATDMPWKMRRFAKLDMSARLELQSALDAEIRAKQAIQEELNKVKASNILTECKLKDSEKKNLELLSEIEQLIKDTEELRSEKGIEHQDSQHSFLAFLNTPTDALDQFEIADCAPLPAHTPTLRKKGCPASTGFPPKRKTHQFFVKSFTAPTKCHQCTSLMVGLIRQGCSCEVCGFSCHITCVNKAPTVCPVPPEQTKGPLGIDPQKGVGTAYEGHVRIPKPAGVKKGWQRALAVVCDFKLFLYDIAEGKASQPTSVISQVIDMRDEEFSVSSVLASDVIHASRKDIPCIFRVTASQLSAPSNKCSILMLADSENERSKWVGVLSELHKILKKNKFRDRSVYVPKEAYDSTLPLIKTTQAAAIIDHERIALGNEEGLFVVHVTKDEIVRVGDNKKIHQIELIPSDQLVAVISGRNRHVRLFPMSALDGRETDFYKLAETKGCQTIAAGKVRHGALSCLCVAMKRQVLCYELFQSKTRHRKFKEIQVPCNVQWMAIFSEHLCVGFQSGFLRYPLNGEGGPCNMLHSNDHTLSFISHQPMDALCAVEISNKEYLLCFNSIGIYTDCQGRRSRQQELMWPANPSSCCYNAPYLSVYSENAVDIFDVNSMEWIQTLPLKKVRPLNTEGSLNLLGLETIRLIYFKNKMAEGDELVVPETSDNSRKQMVRNINNKRRYSFRVPEEERMQQRREMLRDPEMRNKLISNPTNFNHIAHMGPGDGIQILKDLPMNPRPQESRTVFSGSVSIPSITKSRPEPGRSMSASSGLSARSSAQNGSALKREFSGGSYNTKRQPMPSPSEGSLSSGGMDQGSDAPARDYDGEDSDSPRHSTASNSSNLSSPPSPISPQKTKSLSLESTDRGSWDP.

In terms of domain architecture, Protein kinase spans 77 to 343; it reads FEILKVIGRG…IEDFKKHPFF (267 aa). ATP-binding positions include 83–91 and lysine 106; that span reads IGRGAFGEV. Residue aspartate 201 is the Proton acceptor of the active site. A phosphoserine; by autocatalysis mark is found at serine 222 and serine 234. Threonine 240 bears the Phosphothreonine; by autocatalysis mark. The region spanning 344–414 is the AGC-kinase C-terminal domain; sequence SGIDWDNIRN…TSSCVLSDRS (71 aa). Coiled coils occupy residues 437–670, 713–820, and 880–943; these read NNLA…KQKQ, SEIK…WEAQ, and LELQ…SEKG. The Phorbol-ester/DAG-type zinc finger occupies 999–1049; sequence THQFFVKSFTAPTKCHQCTSLMVGLIRQGCSCEVCGFSCHITCVNKAPTVC. Positions 1069–1188 constitute a PH domain; that stretch reads GTAYEGHVRI…WVGVLSELHK (120 aa). Residues 1214 to 1486 form the CNH domain; that stretch reads IKTTQAAAII…RPLNTEGSLN (273 aa). A Phosphoserine modification is found at serine 1532. Residues 1558 to 1571 form the CRIB domain; it reads ISNPTNFNHIAHMG. Residues 1579 to 1719 form a disordered region; that stretch reads LKDLPMNPRP…ESTDRGSWDP (141 aa). The segment covering 1591-1606 has biased composition (polar residues); sequence SRTVFSGSVSIPSITK. Residues serine 1598, serine 1600, serine 1616, serine 1638, serine 1651, serine 1656, serine 1680, serine 1706, and serine 1708 each carry the phosphoserine modification. Over residues 1612–1627 the composition is skewed to low complexity; the sequence is GRSMSASSGLSARSSA. Low complexity predominate over residues 1652–1661; it reads PSEGSLSSGG.

This sequence belongs to the protein kinase superfamily. AGC Ser/Thr protein kinase family. DMPK subfamily. Homodimer and homotetramer via the coiled coil regions. Interacts tightly with GTP-bound but not GDP-bound CDC42. Forms a tripartite complex with MYO18A and LRP35A with the latter acting as an adapter connecting CDC42BPA and MYO18A. LRP35A binding results in activation of CDC42BPA by abolition of its negative autoregulation. Interacts with LURAP1. Interacts (via AGC-kinase C-terminal domain) with FAM89B/LRAP25 (via LRR repeat). Forms a tripartite complex with FAM89B/LRAP25 and LIMK1. It depends on Mg(2+) as a cofactor. In terms of processing, proteolytically cleaved by caspases upon apoptosis induction. The cleavage at Asp-478 by CASP3 increases its kinase activity (in vitro).

It is found in the cytoplasm. Its subcellular location is the cell projection. The protein localises to the lamellipodium. It catalyses the reaction L-seryl-[protein] + ATP = O-phospho-L-seryl-[protein] + ADP + H(+). It carries out the reaction L-threonyl-[protein] + ATP = O-phospho-L-threonyl-[protein] + ADP + H(+). With respect to regulation, maintained in an inactive, closed conformation by an interaction between the kinase domain and the negative autoregulatory C-terminal coiled-coil region. Agonist binding to the phorbol ester binding site disrupts this, releasing the kinase domain to allow N-terminus-mediated dimerization and kinase activation by transautophosphorylation. Inhibited by chelerythrine chloride. Serine/threonine-protein kinase which is an important downstream effector of CDC42 and plays a role in the regulation of cytoskeleton reorganization and cell migration. Regulates actin cytoskeletal reorganization via phosphorylation of PPP1R12C and MYL9/MLC2. In concert with MYO18A and LRP35A, is involved in modulating lamellar actomyosin retrograde flow that is crucial to cell protrusion and migration. Phosphorylates: PPP1R12A and LIMK2. May play a role in TFRC-mediated iron uptake. In concert with FAM89B/LRAP25 mediates the targeting of LIMK1 to the lamellipodium resulting in its activation and subsequent phosphorylation of CFL1 which is important for lamellipodial F-actin regulation. Triggers the formation of an extrusion apical actin ring required for epithelial extrusion of apoptotic cells. This is Serine/threonine-protein kinase MRCK alpha (Cdc42bpa) from Mus musculus (Mouse).